Reading from the N-terminus, the 161-residue chain is MKFPSILLAILLFKPITARFTPLGIDEFYIKPCERKIVYTTDKHDKCLMRRLEIEMDTGENQGYVKCVFKEFGYLNGEGQFNKQALLKDYHQAGFKNKDKAVLESYDGCMKNYGPTPNAMKILDCVTKDKDFPKVINARRERNSDWKPDWIQAYCGVTKLF.

A signal peptide spans Met-1–Ala-18. 3 disulfide bridges follow: Cys-33/Cys-67, Cys-47/Cys-155, and Cys-109/Cys-125.

This sequence belongs to the PBP/GOBP family.

The protein localises to the secreted. In terms of biological role, in contrast to the related D7 salivary proteins, does not bind serotonin. This chain is Short form salivary protein D7S, found in Culex quinquefasciatus (Southern house mosquito).